The following is a 512-amino-acid chain: D-alanine--D-alanyl carrier protein ligase (512 aa).

An ATP-binding site is contributed by 152–153; the sequence is TS. Residue D199 participates in D-alanine binding. ATP is bound at residue 294–299; that stretch reads NAYGPT. V303 contributes to the D-alanine binding site. ATP-binding positions include D385, 397–400, and K499; that span reads YGGR. Residue K499 coordinates D-alanine.

This sequence belongs to the ATP-dependent AMP-binding enzyme family. DltA subfamily.

It is found in the cytoplasm. It carries out the reaction holo-[D-alanyl-carrier protein] + D-alanine + ATP = D-alanyl-[D-alanyl-carrier protein] + AMP + diphosphate. Its pathway is cell wall biogenesis; lipoteichoic acid biosynthesis. Catalyzes the first step in the D-alanylation of lipoteichoic acid (LTA), the activation of D-alanine and its transfer onto the D-alanyl carrier protein (Dcp) DltC. In an ATP-dependent two-step reaction, forms a high energy D-alanyl-AMP intermediate, followed by transfer of the D-alanyl residue as a thiol ester to the phosphopantheinyl prosthetic group of the Dcp. D-alanylation of LTA plays an important role in modulating the properties of the cell wall in Gram-positive bacteria, influencing the net charge of the cell wall. This is D-alanine--D-alanyl carrier protein ligase from Streptococcus pyogenes serotype M18 (strain MGAS8232).